A 338-amino-acid chain; its full sequence is Ketol-acid reductoisomerase (NADP(+)) (338 aa).

The KARI N-terminal Rossmann domain occupies 1–181 (MKVFYDKDAD…GGGRAGIIET (181 aa)). NADP(+)-binding positions include 24-27 (YGSQ), arginine 47, and serine 52. Histidine 107 is an active-site residue. Glycine 133 contributes to the NADP(+) binding site. One can recognise a KARI C-terminal knotted domain in the interval 182 to 327 (NFREETETDL…SKLRAMMPWI (146 aa)). Mg(2+) is bound by residues aspartate 190, glutamate 194, glutamate 226, and glutamate 230. Residue serine 251 coordinates substrate.

This sequence belongs to the ketol-acid reductoisomerase family. Requires Mg(2+) as cofactor.

The catalysed reaction is (2R)-2,3-dihydroxy-3-methylbutanoate + NADP(+) = (2S)-2-acetolactate + NADPH + H(+). It catalyses the reaction (2R,3R)-2,3-dihydroxy-3-methylpentanoate + NADP(+) = (S)-2-ethyl-2-hydroxy-3-oxobutanoate + NADPH + H(+). Its pathway is amino-acid biosynthesis; L-isoleucine biosynthesis; L-isoleucine from 2-oxobutanoate: step 2/4. The protein operates within amino-acid biosynthesis; L-valine biosynthesis; L-valine from pyruvate: step 2/4. In terms of biological role, involved in the biosynthesis of branched-chain amino acids (BCAA). Catalyzes an alkyl-migration followed by a ketol-acid reduction of (S)-2-acetolactate (S2AL) to yield (R)-2,3-dihydroxy-isovalerate. In the isomerase reaction, S2AL is rearranged via a Mg-dependent methyl migration to produce 3-hydroxy-3-methyl-2-ketobutyrate (HMKB). In the reductase reaction, this 2-ketoacid undergoes a metal-dependent reduction by NADPH to yield (R)-2,3-dihydroxy-isovalerate. In Burkholderia thailandensis (strain ATCC 700388 / DSM 13276 / CCUG 48851 / CIP 106301 / E264), this protein is Ketol-acid reductoisomerase (NADP(+)).